A 120-amino-acid chain; its full sequence is MSEQAGSSVAVIQERQALLARQHDAVAEADRELADVLASAHAAMRESVRRLDAIAAELDRAVPDQDQLAVDTPMGAREFQTFLVAKQREIVAVVAAAHELDRAKSAVLKRLRAQYTEPAR.

It to M.tuberculosis Rv0026 and Rv0739.

This is an uncharacterized protein from Mycobacterium tuberculosis (strain CDC 1551 / Oshkosh).